A 214-amino-acid chain; its full sequence is Adenylate kinase (214 aa).

Position 10–15 (10–15 (GAGKGT)) interacts with ATP. Residues 30-59 (STGDMLRAAIKAGTELGKQAKSVIDAGQLV) are NMP. AMP contacts are provided by residues threonine 31, arginine 36, 57-59 (QLV), 85-88 (GFPR), and glutamine 92. The interval 122-159 (GRRAHLASGRTYHNVYNPPKVEGKDDVTGEDLVIREDD) is LID. Residues arginine 123 and 132–133 (TY) each bind ATP. AMP contacts are provided by arginine 156 and arginine 167. Lysine 200 serves as a coordination point for ATP.

Belongs to the adenylate kinase family. Monomer.

The protein resides in the cytoplasm. It carries out the reaction AMP + ATP = 2 ADP. It functions in the pathway purine metabolism; AMP biosynthesis via salvage pathway; AMP from ADP: step 1/1. Catalyzes the reversible transfer of the terminal phosphate group between ATP and AMP. Plays an important role in cellular energy homeostasis and in adenine nucleotide metabolism. The sequence is that of Adenylate kinase from Photobacterium profundum (strain SS9).